The sequence spans 137 residues: Small heat shock protein IbpA (137 aa).

The 110-residue stretch at 28 to 137 (NQSNGGYPPY…SLKPRRIEIK (110 aa)) folds into the sHSP domain.

The protein belongs to the small heat shock protein (HSP20) family. In terms of assembly, monomer. Forms homomultimers of about 100-150 subunits at optimal growth temperatures. Conformation changes to monomers at high temperatures or high ionic concentrations.

It localises to the cytoplasm. Associates with aggregated proteins, together with IbpB, to stabilize and protect them from irreversible denaturation and extensive proteolysis during heat shock and oxidative stress. Aggregated proteins bound to the IbpAB complex are more efficiently refolded and reactivated by the ATP-dependent chaperone systems ClpB and DnaK/DnaJ/GrpE. Its activity is ATP-independent. The polypeptide is Small heat shock protein IbpA (Yersinia pseudotuberculosis serotype O:1b (strain IP 31758)).